The chain runs to 488 residues: Germacrene A hydroxylase (488 aa).

Residues 1–6 are Cytoplasmic-facing; it reads MELSIT. A helical; Signal-anchor for type II membrane protein membrane pass occupies residues 7–23; it reads TSIALATIVFFLYKLAT. The Lumenal segment spans residues 24–488; it reads RPKSTKKQLP…KTELLLVPSF (465 aa). Residues N169, N260, and N379 are each glycosylated (N-linked (GlcNAc...) asparagine). C432 serves as a coordination point for heme.

This sequence belongs to the cytochrome P450 family. The cofactor is heme.

It is found in the endoplasmic reticulum membrane. It catalyses the reaction (+)-(R)-germacrene A + 3 reduced [NADPH--hemoprotein reductase] + 3 O2 = germacra-1(10),4,11(13)-trien-12-oate + 3 oxidized [NADPH--hemoprotein reductase] + 4 H2O + 4 H(+). Its pathway is secondary metabolite biosynthesis; terpenoid biosynthesis. Its function is as follows. Involved in the biosynthesis of germacrene-derived sesquiterpene lactones. Catalyzes three consecutive oxidations of germacrene A to produce germacrene A acid. Could also catalyze the three-step oxidation of non-natural substrate amorphadiene to artemisinic acid. This Lactuca sativa (Garden lettuce) protein is Germacrene A hydroxylase.